A 336-amino-acid chain; its full sequence is Biotin synthase (336 aa).

The Radical SAM core domain occupies 48–277 (VFGDEVEFCS…QAELRLCGGR (230 aa)). Cys66, Cys70, and Cys73 together coordinate [4Fe-4S] cluster. The [2Fe-2S] cluster site is built by Cys110, Cys142, Cys202, and Arg272.

The protein belongs to the radical SAM superfamily. Biotin synthase family. In terms of assembly, homodimer. [4Fe-4S] cluster serves as cofactor. [2Fe-2S] cluster is required as a cofactor.

It catalyses the reaction (4R,5S)-dethiobiotin + (sulfur carrier)-SH + 2 reduced [2Fe-2S]-[ferredoxin] + 2 S-adenosyl-L-methionine = (sulfur carrier)-H + biotin + 2 5'-deoxyadenosine + 2 L-methionine + 2 oxidized [2Fe-2S]-[ferredoxin]. Its pathway is cofactor biosynthesis; biotin biosynthesis; biotin from 7,8-diaminononanoate: step 2/2. Its function is as follows. Catalyzes the conversion of dethiobiotin (DTB) to biotin by the insertion of a sulfur atom into dethiobiotin via a radical-based mechanism. This Persephonella marina (strain DSM 14350 / EX-H1) protein is Biotin synthase.